We begin with the raw amino-acid sequence, 126 residues long: Holo-[acyl-carrier-protein] synthase (126 aa).

Mg(2+) is bound by residues aspartate 9 and glutamate 58.

This sequence belongs to the P-Pant transferase superfamily. AcpS family. The cofactor is Mg(2+).

The protein localises to the cytoplasm. It catalyses the reaction apo-[ACP] + CoA = holo-[ACP] + adenosine 3',5'-bisphosphate + H(+). Transfers the 4'-phosphopantetheine moiety from coenzyme A to a Ser of acyl-carrier-protein. This chain is Holo-[acyl-carrier-protein] synthase, found in Cronobacter sakazakii (strain ATCC BAA-894) (Enterobacter sakazakii).